Here is a 175-residue protein sequence, read N- to C-terminus: Co-chaperone protein daf-41 (175 aa).

The CS domain occupies A2–L89. The tract at residues D109–A175 is disordered. Over residues G148–E168 the composition is skewed to acidic residues.

The protein belongs to the p23/wos2 family. Expressed in anterior and posterior neurons including ASE, AWC, ASI and ADL amphids and phasmid sensory neurons, peripheral neurons and ventral cord motorneurons. Additionally expressed in body wall muscle, pharynx, vulva, germ cells and intestine.

In terms of biological role, co-chaperone for hsp90/daf-21. Involved in regulation of longevity, larval entry and exit from the dauer stage of development and response to environmental cues, such as oxidative stress, in a temperature-dependent manner. Role in daf-16 and hsf-1 inhibition at elevated temperatures. The chain is Co-chaperone protein daf-41 from Caenorhabditis elegans.